Reading from the N-terminus, the 157-residue chain is Ribonuclease H (157 aa).

The RNase H type-1 domain occupies 4 to 146 (KRTEITIYTD…CDKLAVKASQ (143 aa)). The Mg(2+) site is built by aspartate 13, glutamate 51, aspartate 73, and aspartate 138.

This sequence belongs to the RNase H family. As to quaternary structure, monomer. Mg(2+) is required as a cofactor.

Its subcellular location is the cytoplasm. It carries out the reaction Endonucleolytic cleavage to 5'-phosphomonoester.. Its function is as follows. Endonuclease that specifically degrades the RNA of RNA-DNA hybrids. In Trichodesmium erythraeum (strain IMS101), this protein is Ribonuclease H.